We begin with the raw amino-acid sequence, 94 residues long: Alpha-conotoxin Ms20.3 (94 aa).

The N-terminal stretch at 1 to 24 (MPKLAVVLLVLLILPLSYFDAAGG) is a signal peptide. Positions 25 to 45 (QVVQGDRRGNGLARYLQRGDR) are excised as a propeptide. Glu49 is modified (4-carboxyglutamate). Pro55 carries the post-translational modification 4-hydroxyproline. Intrachain disulfides connect Cys63-Cys72, Cys68-Cys80, Cys73-Cys90, and Cys78-Cys92.

Belongs to the conotoxin D superfamily. In terms of assembly, hetero-, homo- or pseudo-homodimer (identical sequence, different post-translational modifications). Homodimer of [carboxyGlu-49, hydroxyPro-55]Ms20.3, and heterodimer of [carboxyGlu-49, hydroxyPro-55]Ms20.3 and [carboxy'Glu-50', hydroxy'Pro-56']Ms20.5 may exist. Expressed by the venom duct.

The protein localises to the secreted. Functionally, alpha-D-conopeptides act on postsynaptic membranes, they bind to the nicotinic acetylcholine receptors (nAChR) and thus inhibit them. Through its two C-terminal domains, this homodimeric protein would bind to two nAChR allosteric sites, located outside the nAChR C-loop of the principal binding face and at the adjacent binding interface in a clockwise direction. This toxin specifically blocks mammalian neuronal nAChR of the alpha-7/CHRNA7 (IC(50)=0.12 nM), alpha-3-beta-2/CHRNA3-CHRNB2 (IC(50)=1.08 nM), and alpha-4-beta-2/CHRNA4-CHRNB2 (IC(50)=4.5 nM) subtypes. Has no effect on alpha-3-beta-4/CHRNA3-CHRNB4, alpha-4-beta-4/CHRNA4-CHRNB4 and alpha-1-beta-1-epsilon-delta/CHRNA1-CHRNB1-CHRNE-CHRND subtypes of nAChRs. In Conus mustelinus (Weasel cone), this protein is Alpha-conotoxin Ms20.3.